A 316-amino-acid polypeptide reads, in one-letter code: Prenytransferase adrG (316 aa).

The next 7 membrane-spanning stretches (helical) occupy residues 36–56, 60–80, 131–151, 163–183, 191–211, 247–267, and 294–314; these read LLGFYLNTSPYLVGVAFCASI, KIPITVLLHRTILLSIWSIFL, VLIYLPWPCAVDCLIITFFAL, PQITLVNIGWAIPMAMHSLGL, PTVCMFLFIGLVIIMIDVIYS, GFLAMAGFFTGLGLSFFVVSV, and KSAFFLATLFWLFGFVIEYCL.

This sequence belongs to the UbiA prenyltransferase family. Mg(2+) is required as a cofactor.

It is found in the membrane. The catalysed reaction is 3,5-dimethylorsellinate + (2E,6E)-farnesyl diphosphate = (3R)-3-farnesyl-6-hydroxy-2,3,5-trimethyl-4-oxocyclohexa-1,5-diene-1-carboxylate + diphosphate + H(+). The protein operates within secondary metabolite biosynthesis; terpenoid biosynthesis. Functionally, prenytransferase; part of the gene cluster that mediates the biosynthesis of andrastins, meroterpenoid compounds that exhibit inhibitory activity against ras farnesyltransferase, suggesting that they could be promising leads for antitumor agents. The first step of the pathway is the synthesis of 3,5-dimethylorsellinic acid (DMOA) by the polyketide synthase adrD via condensation of one acetyl-CoA starter unit with 3 malonyl-CoA units and 2 methylations. DMAO is then converted to farnesyl-DMAO by the prenyltransferase adrG. The methyltransferase adrK catalyzes the methylation of the carboxyl group of farnesyl-DMAO to farnesyl-DMAO methyl ester which is further converted to epoxyfarnesyl-DMAO methyl ester by the FAD-dependent monooxygenase adrH. The terpene cyclase adrI then catalyzes the carbon skeletal rearrangement to generate the andrastin E, the first compound in the pathway having the andrastin scaffold, with the tetracyclic ring system. The post-cyclization tailoring enzymes adrF, adrE, adrJ, and adrA, are involved in the conversion of andrastin E into andrastin A. The short chain dehydrogenase adrF is responsible for the oxidation of the C-3 a hydroxyl group of andrastin E to yield the corresponding ketone, andrastin D. The ketoreductase adrE stereoselectively reduces the carbonyl moiety to reverse the stereochemistry of the C-3 position to yield andrastin F. The acetyltransferase adrJ is the acetyltransferase that attaches the acetyl group to the C-3 hydroxyl group of andrastin F to yield andrastin C. Finally, the cytochrome P450 monooxygenase adrA catalyzes two sequential oxidation reactions of the C-23 methyl group, to generate the corresponding alcohol andrastin B, and aldehyde andrastin A. The protein is Prenytransferase adrG of Penicillium roqueforti.